A 570-amino-acid chain; its full sequence is Mitoguardin 1 (570 aa).

Residues 34–54 traverse the membrane as a helical segment; sequence GLKKIIAVAAISGVSLIFLAC.

The protein belongs to the mitoguardin family. As to quaternary structure, homodimer and heterodimer; forms heterodimers with miga2.

It localises to the mitochondrion outer membrane. Regulator of mitochondrial fusion: acts by forming homo- and heterodimers at the mitochondrial outer membrane and facilitating the formation of pld6/MitoPLD dimers. May act by regulating phospholipid metabolism via pld6/MitoPLD. The chain is Mitoguardin 1 from Xenopus laevis (African clawed frog).